A 421-amino-acid polypeptide reads, in one-letter code: Gamma-glutamyl phosphate reductase (421 aa).

It belongs to the gamma-glutamyl phosphate reductase family.

It localises to the cytoplasm. The catalysed reaction is L-glutamate 5-semialdehyde + phosphate + NADP(+) = L-glutamyl 5-phosphate + NADPH + H(+). The protein operates within amino-acid biosynthesis; L-proline biosynthesis; L-glutamate 5-semialdehyde from L-glutamate: step 2/2. Catalyzes the NADPH-dependent reduction of L-glutamate 5-phosphate into L-glutamate 5-semialdehyde and phosphate. The product spontaneously undergoes cyclization to form 1-pyrroline-5-carboxylate. In Erythrobacter litoralis (strain HTCC2594), this protein is Gamma-glutamyl phosphate reductase.